The following is a 232-amino-acid chain: Clarin-2 (232 aa).

A run of 4 helical transmembrane segments spans residues 8-28, 101-121, 139-159, and 188-208; these read VWYG…IVAL, ILLL…FAIL, LWNV…MAAV, and SFWI…VVAI.

Belongs to the clarin family. In terms of tissue distribution, detected in inner ear, particularly in hair bundles of auditory hair cells and is enriched in apical stereocilia. Detected in eye, but not in brain or muscle.

The protein resides in the cell projection. Its subcellular location is the stereocilium membrane. Its function is as follows. Plays a key role to hearing function. Required for normal organization and maintenance of the stereocilia bundle and for mechano-electrical transduction. In Mus musculus (Mouse), this protein is Clarin-2.